The primary structure comprises 61 residues: Large ribosomal subunit protein uL30 (61 aa).

Belongs to the universal ribosomal protein uL30 family. Part of the 50S ribosomal subunit.

The sequence is that of Large ribosomal subunit protein uL30 from Parafrankia sp. (strain EAN1pec).